A 2525-amino-acid polypeptide reads, in one-letter code: Highly reducing polyketide synthase cm3B (2525 aa).

The segment covering 1 to 10 (MQSDTNNSPL) has biased composition (polar residues). The tract at residues 1–29 (MQSDTNNSPLSWEELRSGAASSDANSSPP) is disordered. The 422-residue stretch at 29 to 450 (PEPIAIIGMS…GTNAHVVVDA (422 aa)) folds into the Ketosynthase family 3 (KS3) domain. Residues C202, H336, and H376 each act as for beta-ketoacyl synthase activity in the active site. The interval 560 to 895 (VFSGQGSQYA…FLECLGALHV (336 aa)) is malonyl-CoA:ACP transacylase (MAT) domain. Residues 949-1087 (HELLGTFAHD…GLVHAETQAA (139 aa)) form an N-terminal hotdog fold region. Residues 949–1252 (HELLGTFAHD…AKGVHTTTLP (304 aa)) form a dehydratase (DH) domain region. The PKS/mFAS DH domain maps to 949-1257 (HELLGTFAHD…TTTLPGDTGL (309 aa)). The Proton acceptor; for dehydratase activity role is filled by H981. The C-terminal hotdog fold stretch occupies residues 1107 to 1257 (VHEVTPQKLY…TTTLPGDTGL (151 aa)). D1169 acts as the Proton donor; for dehydratase activity in catalysis. Positions 1399-1504 (LEVGAGTASA…KKLLKPGGKF (106 aa)) are methyltransferase (CMet) domain. Residues 1799 to 2111 (GLLESIRWKD…AGKHTGKIVL (313 aa)) are enoyl reductase (ER) domain. Residues 2411 to 2489 (AQLLENISQL…ELAKIIAKES (79 aa)) form the Carrier domain. Residues 2411 to 2489 (AQLLENISQL…ELAKIIAKES (79 aa)) are ketoreductase (KR) domain. S2449 is subject to O-(pantetheine 4'-phosphoryl)serine.

The protein operates within secondary metabolite biosynthesis. Highly reducing polyketide synthase; part of the gene cluster that mediates the biosynthesis of beauveriolides I and III, cyclodepsipeptides acting as inhibitors of the acyl-CoA:cholesterol acyltransferase. The HR-PKS cm3B initiates the biosynthesis of beauveriolides by iteratively catalyzing the formation of the linear polyketide chain. The ATP-dependent acetyl-CoA ligase cm3D converts the polyketide carboxylic acid to a CoA thioester which id shuttled to the first T domain in the NRPS cm3A by the acetyltransferase cm3C. Cm3A contains 13 domains and assembles the polyketide chain, L-phenylalanine, L-alanine, and D-leucine (or D-allo-isoleucine) to form beauveriolide I (or beauveriolide III). The production of both beauveriolides I and III suggests the substrate adaptability of cm3B, using different amino acids as substrates. The sequence is that of Highly reducing polyketide synthase cm3B from Cordyceps militaris (strain CM01) (Caterpillar fungus).